We begin with the raw amino-acid sequence, 183 residues long: Porphobilinogen deaminase (183 aa).

Belongs to the HMBS family. Monomer. Requires dipyrromethane as cofactor.

The enzyme catalyses 4 porphobilinogen + H2O = hydroxymethylbilane + 4 NH4(+). Its pathway is porphyrin-containing compound metabolism; protoporphyrin-IX biosynthesis; coproporphyrinogen-III from 5-aminolevulinate: step 2/4. Tetrapolymerization of the monopyrrole PBG into the hydroxymethylbilane pre-uroporphyrinogen in several discrete steps. The chain is Porphobilinogen deaminase (hemC) from Yersinia intermedia.